Reading from the N-terminus, the 209-residue chain is tRNA (guanine-N(7)-)-methyltransferase (209 aa).

S-adenosyl-L-methionine contacts are provided by aspartate 35, glutamate 60, asparagine 87, and aspartate 113. Aspartate 113 is an active-site residue. Substrate is bound by residues lysine 117 and aspartate 149.

The protein belongs to the class I-like SAM-binding methyltransferase superfamily. TrmB family.

The catalysed reaction is guanosine(46) in tRNA + S-adenosyl-L-methionine = N(7)-methylguanosine(46) in tRNA + S-adenosyl-L-homocysteine. Its pathway is tRNA modification; N(7)-methylguanine-tRNA biosynthesis. Functionally, catalyzes the formation of N(7)-methylguanine at position 46 (m7G46) in tRNA. The sequence is that of tRNA (guanine-N(7)-)-methyltransferase from Prochlorococcus marinus subsp. pastoris (strain CCMP1986 / NIES-2087 / MED4).